Reading from the N-terminus, the 361-residue chain is Beta-hexosaminidase (361 aa).

Residues aspartate 69, arginine 77, arginine 144, and 174–175 (KH) each bind substrate. Residue histidine 187 is the Proton donor/acceptor of the active site. Residue aspartate 258 is the Nucleophile of the active site.

Belongs to the glycosyl hydrolase 3 family. NagZ subfamily.

It localises to the cytoplasm. The enzyme catalyses Hydrolysis of terminal non-reducing N-acetyl-D-hexosamine residues in N-acetyl-beta-D-hexosaminides.. It functions in the pathway cell wall biogenesis; peptidoglycan recycling. In terms of biological role, plays a role in peptidoglycan recycling by cleaving the terminal beta-1,4-linked N-acetylglucosamine (GlcNAc) from peptide-linked peptidoglycan fragments, giving rise to free GlcNAc, anhydro-N-acetylmuramic acid and anhydro-N-acetylmuramic acid-linked peptides. In Neisseria meningitidis serogroup C / serotype 2a (strain ATCC 700532 / DSM 15464 / FAM18), this protein is Beta-hexosaminidase.